The sequence spans 446 residues: Cytochrome P450 monooxygenase ATR14 (446 aa).

Positions 403–446 (NFTYPDEFRPDRWLDDRDQKEYEHDHGDAMQPFSVGPRDCPSQK) are disordered. Positions 408–430 (DEFRPDRWLDDRDQKEYEHDHGD) are enriched in basic and acidic residues. Position 442 (C442) interacts with heme.

Belongs to the cytochrome P450 family. It depends on heme as a cofactor.

The protein operates within mycotoxin biosynthesis. Its function is as follows. Cytochrome P450 monooxygenase; part of the core atranone cluster (CAC) which products are predicted to catalyze most or all steps of mycotoxin atranone synthesis, starting from geranylgeranyl pyrophosphate (GGPP). The initial cyclization of GGPP to dolabellane is probably performed by the terpene cyclase ATR13. The Baeyer-Villiger oxidation near the end of the atranone synthesis, which converts atranones D and E to atranones F and G is predicted to be catalyzed by the monooxygenase ATR8. Of the CAC's other predicted gene products, the reducing PKS ATR6 might synthesize a polyketide chain. This polyketide is probably transferred onto the atranone backbone by the polyketide transferase ATR5. Other predicted CAC products include 4 oxygenases (ATR2, ATR3, ATR4, and ATR14), 3 short-chain reductases (ATR7, ATR9, and ATR10), and a methyltransferase (ATR12). These may all be involved in the various steps of atranone biosynthesis, although their specific roles must await experimental determination. This chain is Cytochrome P450 monooxygenase ATR14, found in Stachybotrys chlorohalonatus (strain IBT 40285).